A 203-amino-acid chain; its full sequence is Ras-related protein Rab-7L1 (203 aa).

Positions 33, 34, 35, 36, 37, and 39 each coordinate GTP. Positions 36-44 (YKSTVGVDF) match the Effector region motif. Thr71 carries the phosphothreonine; by LRRK2 modification. Position 72 is a phosphoserine; by LRRK2 (Ser72). Lys126, Val156, and Lys157 together coordinate GTP. S-geranylgeranyl cysteine attachment occurs at residues Cys202 and Cys203.

It belongs to the small GTPase superfamily. Rab family. As to quaternary structure, interacts with LRRK2 (via the N-terminus); this interaction is direct and stimulates kinase activity. Post-translationally, in case of Salmonella enterica serovar Typhimurium (S.typhimurium) infection, is proteolytically cleaved between Gly-41 and Val-42 by the GtgE viral protease encoded on the Gifsy-2 lysogen bacteriophage, which therefore prevents the recruitment of RAB29 to S.typhimurium-containing vacuoles. In contrast, no proteolytically cleavage is detected in S.typhi-infected cells. In terms of tissue distribution, ubiquitous.

The protein resides in the cell membrane. It localises to the cytoplasm. The protein localises to the perinuclear region. Its subcellular location is the golgi apparatus. It is found in the golgi apparatus membrane. The protein resides in the trans-Golgi network. It localises to the vacuole. The protein localises to the cytoskeleton. In terms of biological role, the small GTPases Rab are key regulators in vesicle trafficking. Essential for maintaining the integrity of the endosome-trans-Golgi network structure. Together with LRRK2, plays a role in the retrograde trafficking pathway for recycling proteins, such as mannose 6 phosphate receptor (M6PR), between lysosomes and the Golgi apparatus in a retromer-dependent manner. Recruits LRRK2 to the Golgi complex and stimulates LRRK2 kinase activity. Stimulates phosphorylation of RAB10 'Thr-73' by LRRK2. Regulates neuronal process morphology in the intact central nervous system (CNS). May play a role in the formation of typhoid toxin transport intermediates during Salmonella enterica serovar Typhi (S.typhi) epithelial cell infection. In Homo sapiens (Human), this protein is Ras-related protein Rab-7L1 (RAB29).